Here is a 91-residue protein sequence, read N- to C-terminus: Transcription factor znf27 (91 aa).

The protein localises to the nucleus. In terms of biological role, transcription factor; part of the gene cluster 27 that mediates the biosynthesis of asparasone A, a sclerotium-specific anthraquinone pigment important for sclerotial survival. Controls the expression of the non-reducing polyketide synthase (NRPKS) pks27. This is Transcription factor znf27 from Aspergillus flavus (strain ATCC 200026 / FGSC A1120 / IAM 13836 / NRRL 3357 / JCM 12722 / SRRC 167).